The chain runs to 531 residues: Sop-2-related protein 3 (531 aa).

As to expression, expressed ubiquitously.

It is found in the cytoplasm. Its subcellular location is the nucleus. Its function is as follows. Probably acts synergistically with sop-2 to maintain the transcriptionally repressive state of homeotic genes in order to regulate various neurogenic identities. Specification of some neuronal identities also involves expression of non-Hox genes. Specifies dopaminergic and serotonergic neuronal cell fate, and regulates neurotransmitter choice and axon pathfinding. This is Sop-2-related protein 3 (sor-3) from Caenorhabditis elegans.